A 314-amino-acid polypeptide reads, in one-letter code: Small ribosomal subunit biogenesis GTPase RsgA (314 aa).

The interval 1–21 (MKRAPTKQPAKPAARGGERAQ) is disordered. The 162-residue stretch at 85-246 (SDQFKSKLFA…LIDSPGFQEF (162 aa)) folds into the CP-type G domain. GTP is bound by residues 134-137 (NKID) and 188-196 (GQSGMGKST). Residues C270, C275, H277, and C283 each coordinate Zn(2+).

This sequence belongs to the TRAFAC class YlqF/YawG GTPase family. RsgA subfamily. Monomer. Associates with 30S ribosomal subunit, binds 16S rRNA. The cofactor is Zn(2+).

Its subcellular location is the cytoplasm. One of several proteins that assist in the late maturation steps of the functional core of the 30S ribosomal subunit. Helps release RbfA from mature subunits. May play a role in the assembly of ribosomal proteins into the subunit. Circularly permuted GTPase that catalyzes slow GTP hydrolysis, GTPase activity is stimulated by the 30S ribosomal subunit. In Burkholderia pseudomallei (strain 1710b), this protein is Small ribosomal subunit biogenesis GTPase RsgA.